We begin with the raw amino-acid sequence, 482 residues long: tRNA sulfurtransferase (482 aa).

Residues 61 to 165 (LAIRDALTRI…DDRLLLIKGR (105 aa)) form the THUMP domain. ATP contacts are provided by residues 183 to 184 (LI), Lys-265, Gly-287, and Gln-296. A disulfide bond links Cys-344 and Cys-456. The 79-residue stretch at 404 to 482 (FGPNDVILDI…GFNNVKVYRL (79 aa)) folds into the Rhodanese domain. Cys-456 acts as the Cysteine persulfide intermediate in catalysis.

It belongs to the ThiI family.

It is found in the cytoplasm. The catalysed reaction is [ThiI sulfur-carrier protein]-S-sulfanyl-L-cysteine + a uridine in tRNA + 2 reduced [2Fe-2S]-[ferredoxin] + ATP + H(+) = [ThiI sulfur-carrier protein]-L-cysteine + a 4-thiouridine in tRNA + 2 oxidized [2Fe-2S]-[ferredoxin] + AMP + diphosphate. It carries out the reaction [ThiS sulfur-carrier protein]-C-terminal Gly-Gly-AMP + S-sulfanyl-L-cysteinyl-[cysteine desulfurase] + AH2 = [ThiS sulfur-carrier protein]-C-terminal-Gly-aminoethanethioate + L-cysteinyl-[cysteine desulfurase] + A + AMP + 2 H(+). It functions in the pathway cofactor biosynthesis; thiamine diphosphate biosynthesis. Catalyzes the ATP-dependent transfer of a sulfur to tRNA to produce 4-thiouridine in position 8 of tRNAs, which functions as a near-UV photosensor. Also catalyzes the transfer of sulfur to the sulfur carrier protein ThiS, forming ThiS-thiocarboxylate. This is a step in the synthesis of thiazole, in the thiamine biosynthesis pathway. The sulfur is donated as persulfide by IscS. The chain is tRNA sulfurtransferase from Shigella boydii serotype 18 (strain CDC 3083-94 / BS512).